The following is a 142-amino-acid chain: Thioredoxin-like protein 4A (142 aa).

Cysteines 38 and 79 form a disulfide. S132 is modified (phosphoserine).

This sequence belongs to the DIM1 family. As to quaternary structure, component of the precatalytic spliceosome (spliceosome B complex). Component of the U5 snRNP complex. Component of the U4/U6-U5 tri-snRNP complex. The U4/U6-U5 tri-snRNP complex is a building block of the precatalytic spliceosome (spliceosome B complex). The U4/U6-U5 tri-snRNP complex is composed of the U4, U6 and U5 snRNAs and at least PRPF3, PRPF4, PRPF6, PRPF8, PRPF31, SNRNP200, TXNL4A, SNRNP40, SNRPB, SNRPD1, SNRPD2, SNRPD3, SNRPE, SNRPF, SNRPG, DDX23, CD2BP2, PPIH, SNU13, EFTUD2, SART1 and USP39, plus LSM2, LSM3, LSM4, LSM5, LSM6, LSM7 and LSM8. Directly interacts with CD2BP2. Interacts with HNRPF, HNRPH2, NEDD9 and PQBP1. Interacts with ERBB4. In terms of processing, the disulfide bond seen in structures determined by X-ray crystallography and NMR is not essential for protein folding and function.

The protein localises to the nucleus. In terms of biological role, plays a role in pre-mRNA splicing as component of the U5 snRNP and U4/U6-U5 tri-snRNP complexes that are involved in spliceosome assembly, and as component of the precatalytic spliceosome (spliceosome B complex). This is Thioredoxin-like protein 4A (TXNL4A) from Homo sapiens (Human).